We begin with the raw amino-acid sequence, 506 residues long: Probable Xaa-Pro aminopeptidase PAAG_05466 (506 aa).

Residues D285, D296, E433, and E471 each contribute to the Mn(2+) site.

This sequence belongs to the peptidase M24B family. The cofactor is Mn(2+).

The catalysed reaction is Release of any N-terminal amino acid, including proline, that is linked to proline, even from a dipeptide or tripeptide.. Functionally, catalyzes the removal of a penultimate prolyl residue from the N-termini of peptides. The protein is Probable Xaa-Pro aminopeptidase PAAG_05466 of Paracoccidioides lutzii (strain ATCC MYA-826 / Pb01) (Paracoccidioides brasiliensis).